We begin with the raw amino-acid sequence, 172 residues long: uncharacterized protein (172 aa).

The interval E130–Q154 is disordered.

This is an uncharacterized protein from Bacillus subtilis (strain 168).